The sequence spans 184 residues: NADH-quinone oxidoreductase subunit B (184 aa).

[4Fe-4S] cluster is bound by residues cysteine 37, cysteine 38, cysteine 103, and cysteine 132.

This sequence belongs to the complex I 20 kDa subunit family. As to quaternary structure, NDH-1 is composed of 14 different subunits. Subunits NuoB, C, D, E, F, and G constitute the peripheral sector of the complex. Requires [4Fe-4S] cluster as cofactor.

It localises to the cell membrane. It carries out the reaction a quinone + NADH + 5 H(+)(in) = a quinol + NAD(+) + 4 H(+)(out). Its function is as follows. NDH-1 shuttles electrons from NADH, via FMN and iron-sulfur (Fe-S) centers, to quinones in the respiratory chain. The immediate electron acceptor for the enzyme in this species is believed to be a menaquinone. Couples the redox reaction to proton translocation (for every two electrons transferred, four hydrogen ions are translocated across the cytoplasmic membrane), and thus conserves the redox energy in a proton gradient. This is NADH-quinone oxidoreductase subunit B from Mycolicibacterium gilvum (strain PYR-GCK) (Mycobacterium gilvum (strain PYR-GCK)).